Here is a 172-residue protein sequence, read N- to C-terminus: Acetolactate synthase small subunit (172 aa).

The ACT domain occupies 4–79; that stretch reads IITLTVVNRS…DVLKVTDITN (76 aa).

This sequence belongs to the acetolactate synthase small subunit family. Dimer of large and small chains.

The catalysed reaction is 2 pyruvate + H(+) = (2S)-2-acetolactate + CO2. It participates in amino-acid biosynthesis; L-isoleucine biosynthesis; L-isoleucine from 2-oxobutanoate: step 1/4. It functions in the pathway amino-acid biosynthesis; L-valine biosynthesis; L-valine from pyruvate: step 1/4. The polypeptide is Acetolactate synthase small subunit (ilvH) (Bacillus subtilis (strain 168)).